The following is a 145-amino-acid chain: D-aminoacyl-tRNA deacylase (145 aa).

A Gly-cisPro motif, important for rejection of L-amino acids motif is present at residues 137–138 (GP).

It belongs to the DTD family. As to quaternary structure, homodimer.

The protein localises to the cytoplasm. The catalysed reaction is glycyl-tRNA(Ala) + H2O = tRNA(Ala) + glycine + H(+). It carries out the reaction a D-aminoacyl-tRNA + H2O = a tRNA + a D-alpha-amino acid + H(+). Functionally, an aminoacyl-tRNA editing enzyme that deacylates mischarged D-aminoacyl-tRNAs. Also deacylates mischarged glycyl-tRNA(Ala), protecting cells against glycine mischarging by AlaRS. Acts via tRNA-based rather than protein-based catalysis; rejects L-amino acids rather than detecting D-amino acids in the active site. By recycling D-aminoacyl-tRNA to D-amino acids and free tRNA molecules, this enzyme counteracts the toxicity associated with the formation of D-aminoacyl-tRNA entities in vivo and helps enforce protein L-homochirality. In Cereibacter sphaeroides (strain KD131 / KCTC 12085) (Rhodobacter sphaeroides), this protein is D-aminoacyl-tRNA deacylase.